The sequence spans 334 residues: L-lactate dehydrogenase (334 aa).

The tract at residues 1 to 22 (MASTKGKLIHEMVPSKERDPPH) is disordered. Over residues 8 to 22 (LIHEMVPSKERDPPH) the composition is skewed to basic and acidic residues. Residues 31–59 (GQVG…VEDR) and Arg-101 each bind NAD(+). Residues Arg-108, Asn-140, and Arg-171 each coordinate substrate. Asn-140 lines the NAD(+) pocket. The Proton acceptor role is filled by His-195. Thr-250 provides a ligand contact to substrate.

The protein belongs to the LDH/MDH superfamily. LDH family. In terms of assembly, homotetramer.

It localises to the cytoplasm. It catalyses the reaction (S)-lactate + NAD(+) = pyruvate + NADH + H(+). It participates in fermentation; pyruvate fermentation to lactate; (S)-lactate from pyruvate: step 1/1. This is L-lactate dehydrogenase from Petromyzon marinus (Sea lamprey).